The following is a 329-amino-acid chain: Meiotic drive suppressor wtf21 (329 aa).

The segment at 1-68 is disordered; sequence MKNNYTSLKS…RENNPSRSTD (68 aa). The span at 19-30 shows a compositional bias: basic and acidic residues; it reads KTDHEIDLEKGP. 5 helical membrane-spanning segments follow: residues 73–95, 110–132, 165–182, 192–214, and 290–312; these read FLIKLLISFTPIYVLNVLAICYL, WTLFGFWCLVCTLALIFLTYFYE, IIIWILWLIICCILFVYI, ALICSTCTISAVLLLIVSSVCIP, and GIAFILGGIGNAMMGLANAIRGA.

This sequence belongs to the WTF family. In terms of assembly, homomer. Interacts with other proteins that exhibit high sequence similarity.

The protein localises to the spore membrane. The protein resides in the vacuole membrane. Its function is as follows. Acts as a suppressor component of the dual wtf meiotic drive system, and can suppress but not confer meiotic drive by compatible poisons. Wtf meiotic drive systems promote unequal transmission of alleles from the parental zygote to progeny spores by encoding a poison and an antidote from the same locus; the poison is trans-acting and forms toxic aggregates in all spores within an ascus, wherease the antidote is spore-specific and targets aggregates for degradation by the vacuole. Meiotic drive by wtf systems therefore lead to poisoning of all progeny that do not inherit the dual poison/antidote allele, or express a compatible antidote. In Schizosaccharomyces pombe (strain 972 / ATCC 24843) (Fission yeast), this protein is Meiotic drive suppressor wtf21.